Consider the following 96-residue polypeptide: Prokineticin Bm8-a (96 aa).

The N-terminal stretch at 1 to 19 (MKCFAQIVVLLLVIAFSHG) is a signal peptide. 5 disulfide bridges follow: C26/C38, C32/C50, C37/C78, C60/C86, and C80/C95.

This sequence belongs to the AVIT (prokineticin) family. Expressed by the skin glands.

It is found in the secreted. Its function is as follows. Potent agonist for both PKR1/PROKR1 and PKR2/PROKR2, and inducer of a potent and long-lasting hyperalgesia. Also potentiates capsaicin-induced TRPV1 current, when tested on DRG neurons. At subnanomolar concentrations, this protein both induces potent chemotaxis of macrophages and stimulates LPS-induced production of the pro-inflammatory cytokines IL-1 and IL-12. In vivo, potently stimulates the contraction of the guinea-pig gastrointestinal (GI) smooth muscle (nanomolar concentration). In Bombina maxima (Giant fire-bellied toad), this protein is Prokineticin Bm8-a.